Consider the following 827-residue polypeptide: MTKLNAQVKGSLNVTTPGVQIWRIEAMQMVPVSSSTYGSFFDGDCYIVLAIHKTGSNLSYDIHYWIGQDSSQDEQGAAAIYTTLMDDFLKGRAVQHREVQGNESEAFRGYFKQGIVIRKGGVASGMKKVETNSYDIQRLLHVKGKRNVVAGEVEMSWKSFNRGDVFLLDLGKLIIQWNGPESNRMERLRGMTLAKEIRDQERGGRTYVGVVDGEDEKASPQLMEIMNYVLGQRKELKAAVPDTVVEPALKAALKLYHVSDSEGKVVVREVATRPLTQDLLSHEDCYILDQGGLKIYVWKGKNANPQEKKEAMNQALNFIKAKQYPPSTQVEVQNDGAESAVFQQLFQKWTVPNQTSGLGKTHTVGSVAKVEQVKFDATSMHVQPQVAAQQKMVDDGSGEVEIWRIENLDLVPVESKWVGHFYGGDCYLLLYTYLIGEKQHYLLYIWQGSQASQDEITASAYQAVILDQKYNNEPVQIRVPMGKEPPHLMSIFKGRMVVYQGGTSRANSTEPVPSTRLFQVRGTSVNNTKAFEVPARATSLNSNDIFVLKTQSCCYLWCGKGCSGDEREMAKMVADTISRTEKQVVVEGQEPANFWVALGGKAPYASSKRLQEETLVITPRLFECSNQTGRFLATEIPDFNQDDLEEDDVFLLDVWDQVFFWIGKNANEDEKKAAAVTAQEYLKTHPSGRDPETPIIVVKQGYEPPTFTGWFLAWDPFKWSDSKSYEDLKAELGNSGDWSQITAEIKNPKPDVFNANTNLSSGPLPIFPLEQLVNKPAEELPQGVDPSRREEHLSIEDFTKALGMTPAAFSALPRWKQQNLKKEKGLF.

The interval 1 to 126 (MTKLNAQVKG…IRKGGVASGM (126 aa)) is necessary for homodimerization. Residues 1 to 734 (MTKLNAQVKG…YEDLKAELGN (734 aa)) form a core region. The Gelsolin-like 1 repeat unit spans residues 28–107 (QMVPVSSSTY…EVQGNESEAF (80 aa)). 2 LPA/PIP2-binding site regions span residues 112–119 (KQGIVIRK) and 138–146 (RLLHVKGKR). Gelsolin-like repeat units follow at residues 148 to 216 (VVAG…GEDE) and 269 to 342 (EVAT…SAVF). Serine 366 is modified (phosphoserine). Gelsolin-like repeat units follow at residues 409-489 (DLVP…PHLM), 528-595 (TKAF…ANFW), and 634-707 (TEIP…PPTF). Serine 735 bears the Phosphoserine mark. In terms of domain architecture, HP spans 761–827 (SGPLPIFPLE…QNLKKEKGLF (67 aa)). The LPA/PIP2-binding site 3 stretch occupies residues 816–824 (KQQNLKKEK).

Belongs to the villin/gelsolin family. In terms of assembly, monomer. Homodimer; homodimerization is necessary for actin-bundling. Associates with F-actin; phosphorylation at tyrosine residues decreases the association with F-actin. Interacts (phosphorylated at C-terminus tyrosine phosphorylation sites) with PLCG1 (via the SH2 domains). Interacts (phosphorylated form) with PLCG1; the interaction is enhanced by hepatocyte growth factor (HGF). Phosphorylated on tyrosine residues by SRC. The unphosphorylated form increases the initial rate of actin-nucleating activity, whereas the tyrosine-phosphorylated form inhibits actin-nucleating activity, enhances actin-bundling activity and enhances actin-severing activity by reducing high Ca(2+) requirements. The tyrosine-phosphorylated form does not regulate actin-capping activity. Tyrosine phosphorylation is essential for cell migration: tyrosine phosphorylation sites in the N-terminus half regulate actin reorganization and cell morphology, whereas tyrosine phosphorylation sites in the C-terminus half regulate cell migration. Tyrosine phosphorylation is induced by epidermal growth factor (EGF) and stimulates cell migration.

The protein localises to the cytoplasm. The protein resides in the cytoskeleton. Its subcellular location is the cell projection. It localises to the lamellipodium. It is found in the ruffle. The protein localises to the microvillus. The protein resides in the filopodium tip. Its subcellular location is the filopodium. Epithelial cell-specific Ca(2+)-regulated actin-modifying protein that modulates the reorganization of microvillar actin filaments. Plays a role in the actin nucleation, actin filament bundle assembly, actin filament capping and severing. Binds phosphatidylinositol 4,5-bisphosphate (PIP2) and lysophosphatidic acid (LPA); binds LPA with higher affinity than PIP2. Binding to LPA increases its phosphorylation by SRC and inhibits all actin-modifying activities. Binding to PIP2 inhibits actin-capping and -severing activities but enhances actin-bundling activity. Regulates the intestinal epithelial cell morphology, cell invasion, cell migration and apoptosis. Protects against apoptosis induced by dextran sodium sulfate (DSS) in the gastrointestinal epithelium. Appears to regulate cell death by maintaining mitochondrial integrity. Enhances hepatocyte growth factor (HGF)-induced epithelial cell motility, chemotaxis and wound repair. This Sus scrofa (Pig) protein is Villin-1 (VIL1).